Reading from the N-terminus, the 467-residue chain is Probable apyrase 2 (467 aa).

Residues 1-25 lie on the Cytoplasmic side of the membrane; that stretch reads MRRYSALPGGGARPDTLADRLHRYR. The chain crosses the membrane as a helical; Signal-anchor for type II membrane protein span at residues 26–46; the sequence is GVLLVILAPLALVSLVLLLMP. The Extracellular segment spans residues 47 to 467; the sequence is RSPASSSAAA…PLGSAIEVAS (421 aa). 70–80 contacts ATP; that stretch reads VIFDAGSSGSR. The active-site Proton acceptor is the glutamate 192. 216–226 serves as a coordination point for ATP; that stretch reads GVVDLGGGSVQ.

The protein belongs to the GDA1/CD39 NTPase family. It depends on Ca(2+) as a cofactor.

The protein localises to the membrane. It catalyses the reaction a ribonucleoside 5'-triphosphate + 2 H2O = a ribonucleoside 5'-phosphate + 2 phosphate + 2 H(+). Functionally, catalyzes the hydrolysis of phosphoanhydride bonds of nucleoside tri- and di-phosphates. The protein is Probable apyrase 2 (APY2) of Oryza sativa subsp. japonica (Rice).